The following is a 325-amino-acid chain: Tetraacyldisaccharide 4'-kinase (325 aa).

ATP is bound at residue 55–62 (TAGGNGKT).

Belongs to the LpxK family.

The catalysed reaction is a lipid A disaccharide + ATP = a lipid IVA + ADP + H(+). The protein operates within glycolipid biosynthesis; lipid IV(A) biosynthesis; lipid IV(A) from (3R)-3-hydroxytetradecanoyl-[acyl-carrier-protein] and UDP-N-acetyl-alpha-D-glucosamine: step 6/6. Transfers the gamma-phosphate of ATP to the 4'-position of a tetraacyldisaccharide 1-phosphate intermediate (termed DS-1-P) to form tetraacyldisaccharide 1,4'-bis-phosphate (lipid IVA). This chain is Tetraacyldisaccharide 4'-kinase, found in Salmonella typhi.